The chain runs to 597 residues: Elongation factor 4 (597 aa).

Residues 2–184 (KNIRNFSIIA…EIVAKIPAPA (183 aa)) enclose the tr-type G domain. GTP is bound by residues 14 to 19 (DHGKST) and 131 to 134 (NKID).

The protein belongs to the TRAFAC class translation factor GTPase superfamily. Classic translation factor GTPase family. LepA subfamily.

The protein localises to the cell inner membrane. It catalyses the reaction GTP + H2O = GDP + phosphate + H(+). Its function is as follows. Required for accurate and efficient protein synthesis under certain stress conditions. May act as a fidelity factor of the translation reaction, by catalyzing a one-codon backward translocation of tRNAs on improperly translocated ribosomes. Back-translocation proceeds from a post-translocation (POST) complex to a pre-translocation (PRE) complex, thus giving elongation factor G a second chance to translocate the tRNAs correctly. Binds to ribosomes in a GTP-dependent manner. This chain is Elongation factor 4, found in Neisseria meningitidis serogroup A / serotype 4A (strain DSM 15465 / Z2491).